The sequence spans 104 residues: Interferon alpha-inducible protein 27-like protein 1 (104 aa).

3 helical membrane passes run Val-14–Met-34, Gly-59–Leu-79, and Val-81–Pro-101.

The protein belongs to the IFI6/IFI27 family.

The protein localises to the membrane. Plays a role in the apoptotic process and has a pro-apoptotic activity. The polypeptide is Interferon alpha-inducible protein 27-like protein 1 (Homo sapiens (Human)).